The sequence spans 126 residues: Holo-[acyl-carrier-protein] synthase (126 aa).

The Mg(2+) site is built by D8 and E57.

The protein belongs to the P-Pant transferase superfamily. AcpS family. The cofactor is Mg(2+).

The protein localises to the cytoplasm. The catalysed reaction is apo-[ACP] + CoA = holo-[ACP] + adenosine 3',5'-bisphosphate + H(+). Its function is as follows. Transfers the 4'-phosphopantetheine moiety from coenzyme A to a Ser of acyl-carrier-protein. This chain is Holo-[acyl-carrier-protein] synthase, found in Halorhodospira halophila (strain DSM 244 / SL1) (Ectothiorhodospira halophila (strain DSM 244 / SL1)).